Reading from the N-terminus, the 631-residue chain is Chaperone protein HtpG (631 aa).

Residues Met-1–Arg-339 form an a; substrate-binding region. The tract at residues Glu-340–Lys-555 is b. The interval Leu-556–His-631 is c.

It belongs to the heat shock protein 90 family. Homodimer.

Its subcellular location is the cytoplasm. Molecular chaperone. Has ATPase activity. The polypeptide is Chaperone protein HtpG (Pasteurella multocida (strain Pm70)).